Here is a 255-residue protein sequence, read N- to C-terminus: F-box/SPRY domain-containing protein 1 (255 aa).

The F-box domain maps to 3–51 (DPVAALCNYNVLEVIFSYLELDDLSHCSQVCKSWYHFLNDENSDVWRWH). One can recognise a B30.2/SPRY domain in the interval 61–253 (LKSDLLSSVP…VSMVYLGTPL (193 aa)).

It belongs to the FBXO45/Fsn family. In terms of assembly, component of an E3 ubiquitin ligase complex composed of hiw and Fsn.

It is found in the synapse. It participates in protein modification; protein ubiquitination. Functionally, required in the presynaptic motoneuron to down-regulate the levels of wnd and restrain synaptic terminal growth at the neuromuscular junction (NMJ). The protein is F-box/SPRY domain-containing protein 1 of Drosophila sechellia (Fruit fly).